Here is a 217-residue protein sequence, read N- to C-terminus: Glycosylphosphatidylinositol anchor biosynthesis protein 11 (217 aa).

The next 2 helical transmembrane spans lie at 45–65 (TWLT…KVFN) and 68–88 (NTAE…IFQF). N102 carries N-linked (GlcNAc...) asparagine glycosylation. 4 consecutive transmembrane segments (helical) span residues 107-127 (AISI…IILF), 134-154 (LLWE…PAVY), 169-189 (YFIL…LDWD), and 197-217 (IPIV…GAYL).

Belongs to the PIGF family.

It localises to the endoplasmic reticulum membrane. Its pathway is glycolipid biosynthesis; glycosylphosphatidylinositol-anchor biosynthesis. Acts in the GPI biosynthetic pathway between GlcNAc-PI synthesis and GPI transfer to protein. This is Glycosylphosphatidylinositol anchor biosynthesis protein 11 (GPI11) from Candida glabrata (strain ATCC 2001 / BCRC 20586 / JCM 3761 / NBRC 0622 / NRRL Y-65 / CBS 138) (Yeast).